Here is a 203-residue protein sequence, read N- to C-terminus: NAD(P)H dehydrogenase (quinone) (203 aa).

The region spanning 3–194 (VLIVYYSLYG…DAARFQGRHI (192 aa)) is the Flavodoxin-like domain. FMN contacts are provided by residues 9–14 (SLYGHV) and 82–84 (TRF). Tyrosine 11 is an NAD(+) binding site. Tryptophan 102 serves as a coordination point for substrate. FMN contacts are provided by residues 117 to 123 (STATQHG) and histidine 138.

Belongs to the WrbA family. FMN serves as cofactor.

It carries out the reaction a quinone + NADH + H(+) = a quinol + NAD(+). It catalyses the reaction a quinone + NADPH + H(+) = a quinol + NADP(+). The polypeptide is NAD(P)H dehydrogenase (quinone) (Solidesulfovibrio magneticus (strain ATCC 700980 / DSM 13731 / RS-1) (Desulfovibrio magneticus)).